The following is a 648-amino-acid chain: Serine/arginine repetitive matrix protein 3 (648 aa).

The segment at 1 to 44 is disordered; that stretch reads MSSTVNNGATGMPAPPDAANGFPQPGASSGSWPRAEEELRAAEP. In terms of domain architecture, CWF21 spans 55-98; the sequence is LDHERKRRVELKCMELQEMMEEQGYSEEEIRQKVGTFRQMLMEK. Over residues 99–109 the composition is skewed to basic and acidic residues; it reads EGVLTREDRPG. Disordered stretches follow at residues 99–139 and 154–648; these read EGVL…DGPV and YRTK…SGGF. 3 stretches are compositionally biased toward basic residues: residues 168–186, 199–211, and 219–243; these read PKKKKKKKGSHRRSRKKRR, LRKKKKNVKKHRR, and RRKRRYRSRSLKSKRKEKNKERKRP. Low complexity-rich tracts occupy residues 257–276 and 289–317; these read SASSHSPSMSSHYSDSGSPS and TGSQRSSGSRSPSPSGGSGWGSPQQNGGS. Over residues 381-409 the composition is skewed to basic residues; sequence ARRRRRRRRRRRSRSSANAPRRRGRRRTK. Composition is skewed to low complexity over residues 414-428, 461-471, and 493-502; these read RGSSRSLSGAHSSSD, RPASTSPSPGT, and SWSSSRSPSK. Basic and acidic residues predominate over residues 525 to 544; sequence LGRDKDSEGRARHAEAEAAR. Over residues 545 to 560 the composition is skewed to basic residues; sequence TRRRSRSYSPIRKRRR. Low complexity predominate over residues 579–648; that stretch reads IPYYRPSPSS…SRSSSESGGF (70 aa).

Belongs to the CWC21 family.

In terms of biological role, may play a role in regulating breast cancer cell invasiveness. May be involved in RYBP-mediated breast cancer progression. The protein is Serine/arginine repetitive matrix protein 3 (Srrm3) of Mus musculus (Mouse).